A 330-amino-acid polypeptide reads, in one-letter code: Inactive hydroxysteroid dehydrogenase-like protein 1 (330 aa).

Alanine 2 carries the post-translational modification N-acetylalanine. The tract at residues 2 to 82 is required for mitochondria translocation; it reads AAVDSFYLLY…SGATDGIGKA (81 aa). NADP(+) contacts are provided by residues 74-80, aspartate 125, and lysine 222; that span reads GATDGIG.

It belongs to the short-chain dehydrogenases/reductases (SDR) family. 17-beta-HSD 3 subfamily. Interacts with STYXL1.

It localises to the mitochondrion. The chain is Inactive hydroxysteroid dehydrogenase-like protein 1 (Hsdl1) from Mus musculus (Mouse).